Here is a 384-residue protein sequence, read N- to C-terminus: 8-amino-7-oxononanoate synthase (384 aa).

Arginine 21 is a binding site for substrate. Residue 108-109 (GF) coordinates pyridoxal 5'-phosphate. Substrate is bound at residue histidine 133. Residues serine 179, histidine 207, and threonine 233 each contribute to the pyridoxal 5'-phosphate site. Lysine 236 is subject to N6-(pyridoxal phosphate)lysine. Threonine 352 serves as a coordination point for substrate.

The protein belongs to the class-II pyridoxal-phosphate-dependent aminotransferase family. BioF subfamily. Homodimer. Requires pyridoxal 5'-phosphate as cofactor.

It carries out the reaction 6-carboxyhexanoyl-[ACP] + L-alanine + H(+) = (8S)-8-amino-7-oxononanoate + holo-[ACP] + CO2. It participates in cofactor biosynthesis; biotin biosynthesis. Catalyzes the decarboxylative condensation of pimeloyl-[acyl-carrier protein] and L-alanine to produce 8-amino-7-oxononanoate (AON), [acyl-carrier protein], and carbon dioxide. This is 8-amino-7-oxononanoate synthase from Shigella sonnei (strain Ss046).